The sequence spans 428 residues: Glutamate-1-semialdehyde 2,1-aminomutase (428 aa).

Lys267 is modified (N6-(pyridoxal phosphate)lysine).

The protein belongs to the class-III pyridoxal-phosphate-dependent aminotransferase family. HemL subfamily. As to quaternary structure, homodimer. It depends on pyridoxal 5'-phosphate as a cofactor.

Its subcellular location is the cytoplasm. It catalyses the reaction (S)-4-amino-5-oxopentanoate = 5-aminolevulinate. It participates in porphyrin-containing compound metabolism; protoporphyrin-IX biosynthesis; 5-aminolevulinate from L-glutamyl-tRNA(Glu): step 2/2. The chain is Glutamate-1-semialdehyde 2,1-aminomutase from Flavobacterium psychrophilum (strain ATCC 49511 / DSM 21280 / CIP 103535 / JIP02/86).